We begin with the raw amino-acid sequence, 109 residues long: Nucleoid-associated protein Sama_1311 (109 aa).

It belongs to the YbaB/EbfC family. In terms of assembly, homodimer.

The protein resides in the cytoplasm. It is found in the nucleoid. Its function is as follows. Binds to DNA and alters its conformation. May be involved in regulation of gene expression, nucleoid organization and DNA protection. The sequence is that of Nucleoid-associated protein Sama_1311 from Shewanella amazonensis (strain ATCC BAA-1098 / SB2B).